A 322-amino-acid polypeptide reads, in one-letter code: N-acetyl-gamma-glutamyl-phosphate reductase (322 aa).

Residue cysteine 132 is part of the active site.

This sequence belongs to the NAGSA dehydrogenase family. Type 1 subfamily.

Its subcellular location is the cytoplasm. It carries out the reaction N-acetyl-L-glutamate 5-semialdehyde + phosphate + NADP(+) = N-acetyl-L-glutamyl 5-phosphate + NADPH + H(+). It participates in amino-acid biosynthesis; L-arginine biosynthesis; N(2)-acetyl-L-ornithine from L-glutamate: step 3/4. Catalyzes the NADPH-dependent reduction of N-acetyl-5-glutamyl phosphate to yield N-acetyl-L-glutamate 5-semialdehyde. In Parabacteroides distasonis (strain ATCC 8503 / DSM 20701 / CIP 104284 / JCM 5825 / NCTC 11152), this protein is N-acetyl-gamma-glutamyl-phosphate reductase.